The sequence spans 340 residues: Phosphoribosylformylglycinamidine cyclo-ligase (340 aa).

It belongs to the AIR synthase family.

It is found in the cytoplasm. It carries out the reaction 2-formamido-N(1)-(5-O-phospho-beta-D-ribosyl)acetamidine + ATP = 5-amino-1-(5-phospho-beta-D-ribosyl)imidazole + ADP + phosphate + H(+). It functions in the pathway purine metabolism; IMP biosynthesis via de novo pathway; 5-amino-1-(5-phospho-D-ribosyl)imidazole from N(2)-formyl-N(1)-(5-phospho-D-ribosyl)glycinamide: step 2/2. The protein is Phosphoribosylformylglycinamidine cyclo-ligase of Streptococcus mutans serotype c (strain ATCC 700610 / UA159).